The primary structure comprises 270 residues: Gap junction beta-3 protein (270 aa).

Residues 1–20 (MDWKKLQDLLSGVNQYSTAF) lie on the Cytoplasmic side of the membrane. Residues 21–40 (GRIWLSVVFVFRVLVYVVAA) traverse the membrane as a helical segment. Residues 41 to 75 (ERVWGDEQKDFDCNTRQPGCTNVCYDNFFPISNIR) lie on the Extracellular side of the membrane. The chain crosses the membrane as a helical span at residues 76–98 (LWALQLIFVTCPSMLVILHVAYR). Over 99 to 126 (EERERKHRQKHGEQCAKLYSHPGKKHGG) the chain is Cytoplasmic. Residues 127–149 (LWWTYLFSLIFKLIIELVFLYVL) form a helical membrane-spanning segment. Over 150–188 (HTLWHGFTMPRLVQCASIVPCPNTVDCYIARPTEKKVFT) the chain is Extracellular. The helical transmembrane segment at 189–211 (YFMVGASAVCIILTICEICYLIF) threads the bilayer. Over 212–270 (HRIMRGISKGKSTKSISSPKSSSRASTCRCHHKLLESGDPEADPASEKLQASAPSLTPI) the chain is Cytoplasmic. A disordered region spans residues 246-270 (LESGDPEADPASEKLQASAPSLTPI).

The protein belongs to the connexin family. Beta-type (group I) subfamily. In terms of assembly, a connexon is composed of a hexamer of connexins. Interacts with CNST.

The protein localises to the cell membrane. Its subcellular location is the cell junction. It localises to the gap junction. One gap junction consists of a cluster of closely packed pairs of transmembrane channels, the connexons, through which materials of low MW diffuse from one cell to a neighboring cell. The polypeptide is Gap junction beta-3 protein (Gjb3) (Mus musculus (Mouse)).